The primary structure comprises 390 residues: Serine/threonine/tyrosine-protein kinase HT1 (390 aa).

Positions 86 to 359 (LFIGNKFASG…GLPLTSHASL (274 aa)) constitute a Protein kinase domain. Residues 92–100 (FASGAHSRI) and K113 contribute to the ATP site. D212 acts as the Proton acceptor in catalysis.

This sequence belongs to the protein kinase superfamily. Ser/Thr protein kinase family. Interacts with DTX56. Binds to MPK4 and MPK12. Associates to CBC1 and CBC2. Post-translationally, autophosphorylated. As to expression, mainly localizes in guard cells. Expressed at low level in leaves, stems, roots and flowers.

Its subcellular location is the cell membrane. The catalysed reaction is L-seryl-[protein] + ATP = O-phospho-L-seryl-[protein] + ADP + H(+). The enzyme catalyses L-threonyl-[protein] + ATP = O-phospho-L-threonyl-[protein] + ADP + H(+). It catalyses the reaction L-tyrosyl-[protein] + ATP = O-phospho-L-tyrosyl-[protein] + ADP + H(+). Its activity is regulated as follows. Inhibited by MPK4 and MPK12. Functionally, serine/threonine/tyrosine kinase involved in the control of stomatal movement in response to CO(2). Functions as a major negative regulator of CO(2)-induced stomatal closing. Does not seem to be involved in stomatal closure in response to abscisic acid (ABA) or light. Involved in the control of red light-induced stomatal opening. Is epistatic to SRK2E/OST1 function during stomatal responses to red light and altered CO(2). Phosphorylates SRK2E/OST1 and GHR1 to prevents SRK2E/OST1- and GHR1-induced activation of SLAC1, thus preventing stomatal closure. Mediates the phosphorylation of CBC1 and CBC2. This is Serine/threonine/tyrosine-protein kinase HT1 from Arabidopsis thaliana (Mouse-ear cress).